The following is a 341-amino-acid chain: UDP-N-acetylglucosamine--N-acetylmuramyl-(pentapeptide) pyrophosphoryl-undecaprenol N-acetylglucosamine transferase (341 aa).

Residues 10–12 (TGG), N124, S177, and Q275 each bind UDP-N-acetyl-alpha-D-glucosamine.

Belongs to the glycosyltransferase 28 family. MurG subfamily.

Its subcellular location is the cell inner membrane. It carries out the reaction di-trans,octa-cis-undecaprenyl diphospho-N-acetyl-alpha-D-muramoyl-L-alanyl-D-glutamyl-meso-2,6-diaminopimeloyl-D-alanyl-D-alanine + UDP-N-acetyl-alpha-D-glucosamine = di-trans,octa-cis-undecaprenyl diphospho-[N-acetyl-alpha-D-glucosaminyl-(1-&gt;4)]-N-acetyl-alpha-D-muramoyl-L-alanyl-D-glutamyl-meso-2,6-diaminopimeloyl-D-alanyl-D-alanine + UDP + H(+). Its pathway is cell wall biogenesis; peptidoglycan biosynthesis. Its function is as follows. Cell wall formation. Catalyzes the transfer of a GlcNAc subunit on undecaprenyl-pyrophosphoryl-MurNAc-pentapeptide (lipid intermediate I) to form undecaprenyl-pyrophosphoryl-MurNAc-(pentapeptide)GlcNAc (lipid intermediate II). This chain is UDP-N-acetylglucosamine--N-acetylmuramyl-(pentapeptide) pyrophosphoryl-undecaprenol N-acetylglucosamine transferase, found in Campylobacter hominis (strain ATCC BAA-381 / DSM 21671 / CCUG 45161 / LMG 19568 / NCTC 13146 / CH001A).